A 184-amino-acid polypeptide reads, in one-letter code: ATP synthase subunit b, chloroplastic (184 aa).

A helical membrane pass occupies residues 4–24; that stretch reads IINLVIFSGYWPIAGNFGLNT.

This sequence belongs to the ATPase B chain family. In terms of assembly, F-type ATPases have 2 components, F(1) - the catalytic core - and F(0) - the membrane proton channel. F(1) has five subunits: alpha(3), beta(3), gamma(1), delta(1), epsilon(1). F(0) has four main subunits: a(1), b(1), b'(1) and c(10-14). The alpha and beta chains form an alternating ring which encloses part of the gamma chain. F(1) is attached to F(0) by a central stalk formed by the gamma and epsilon chains, while a peripheral stalk is formed by the delta, b and b' chains.

The protein resides in the plastid. It localises to the chloroplast thylakoid membrane. F(1)F(0) ATP synthase produces ATP from ADP in the presence of a proton or sodium gradient. F-type ATPases consist of two structural domains, F(1) containing the extramembraneous catalytic core and F(0) containing the membrane proton channel, linked together by a central stalk and a peripheral stalk. During catalysis, ATP synthesis in the catalytic domain of F(1) is coupled via a rotary mechanism of the central stalk subunits to proton translocation. Its function is as follows. Component of the F(0) channel, it forms part of the peripheral stalk, linking F(1) to F(0). The chain is ATP synthase subunit b, chloroplastic from Physcomitrium patens (Spreading-leaved earth moss).